A 706-amino-acid chain; its full sequence is MPARKIFVTTALPYANGNFHIGHIMEYIQADIWVRFQRMQGAEVNFVGADDTHGAPIMIAAEKAGKTPQQFVADIAAGRKPYLEGFHIRFDNWHSTDAPENHELARQIYRDLQAAGLIETRTIEQFFDPEKNMFLPDRFIKGECPRCHARDQYGDNCENCGAVYAPTDLIEPYSALSGAKPVLKSSDHFFFQLSDPRCVAFLQEWTQDGRLQPEVANKVKEWFSVRTNPDGTTSEGLGDWDISRDAPYFGIEIPDAPGKYFYVWLDAPVGYLASLKNLLEKRGQSYDDYVADPQLEQVHFIGKDIVTFHTLFWPAMLKFSGRKTPDAVFVHGFLTVNNGEKMSKSRGTGLDPLKYLGLGMNAEWLRYYLAAKLNGRNEDIDFNAEDFMARVNSDLIGKFVNIASRAAGFLTKRFGGRLGAPDADGAALLEALRAQAGAIAEAYERRDTARAVRETMLLADRVNEYVDARKPWELAKQEGQEAALQAACTTCIEAFRLLTLYLKPVLPALAAQVEAFLNVQPLTFADAPALLGEGHAIGAYQHLMQRVDIKQLEALFEVPAAAAAPAAPAANAAAEASAAAGAATEAPGGEHIAPTITIDDFAKIDLRIALIVNCEPVEGSTKLLRLTLDVGEGRHRNVFSGIASAYRPEELVGKLTVMVANLAPRKMKFGVSEGMVLAASHGDEKAHPGIHVLNPWPGATPGMRVR.

The 'HIGH' region motif lies at 13-23; sequence PYANGNFHIGH. Zn(2+) contacts are provided by C144, C147, C157, and C160. Positions 341 to 345 match the 'KMSKS' region motif; it reads KMSKS. K344 is an ATP binding site. The region spanning 600 to 706 is the tRNA-binding domain; the sequence is DFAKIDLRIA…PGATPGMRVR (107 aa).

The protein belongs to the class-I aminoacyl-tRNA synthetase family. MetG type 1 subfamily. In terms of assembly, homodimer. Zn(2+) serves as cofactor.

The protein resides in the cytoplasm. The enzyme catalyses tRNA(Met) + L-methionine + ATP = L-methionyl-tRNA(Met) + AMP + diphosphate. Functionally, is required not only for elongation of protein synthesis but also for the initiation of all mRNA translation through initiator tRNA(fMet) aminoacylation. In Paracidovorax citrulli (strain AAC00-1) (Acidovorax citrulli), this protein is Methionine--tRNA ligase.